A 158-amino-acid chain; its full sequence is Phosphopantetheine adenylyltransferase (158 aa).

Serine 8 serves as a coordination point for substrate. ATP-binding positions include serine 8 to phenylalanine 9 and histidine 16. Lysine 40, threonine 72, and arginine 86 together coordinate substrate. Residues glycine 87 to arginine 89, glutamate 97, and histidine 122 to serine 128 contribute to the ATP site.

This sequence belongs to the bacterial CoaD family. As to quaternary structure, homohexamer. Mg(2+) serves as cofactor.

Its subcellular location is the cytoplasm. It catalyses the reaction (R)-4'-phosphopantetheine + ATP + H(+) = 3'-dephospho-CoA + diphosphate. Its pathway is cofactor biosynthesis; coenzyme A biosynthesis; CoA from (R)-pantothenate: step 4/5. Its function is as follows. Reversibly transfers an adenylyl group from ATP to 4'-phosphopantetheine, yielding dephospho-CoA (dPCoA) and pyrophosphate. The polypeptide is Phosphopantetheine adenylyltransferase (Prochlorococcus marinus (strain NATL1A)).